Here is a 353-residue protein sequence, read N- to C-terminus: 4-hydroxy-2-oxovalerate aldolase 1 (353 aa).

In terms of domain architecture, Pyruvate carboxyltransferase spans 14-266 (VRMTDTSLRD…KTGIDFFDIA (253 aa)). 22-23 (RD) contacts substrate. Asp-23 contributes to the Mn(2+) binding site. The active-site Proton acceptor is His-26. 2 residues coordinate substrate: Ser-176 and His-205. Positions 205 and 207 each coordinate Mn(2+). Tyr-296 lines the substrate pocket.

The protein belongs to the 4-hydroxy-2-oxovalerate aldolase family.

It carries out the reaction (S)-4-hydroxy-2-oxopentanoate = acetaldehyde + pyruvate. This Mycobacterium sp. (strain KMS) protein is 4-hydroxy-2-oxovalerate aldolase 1.